The following is a 306-amino-acid chain: Serine/threonine-protein phosphatase PP2A-2 catalytic subunit (306 aa).

Mn(2+) is bound by residues Asp-54, His-56, Asp-82, and Asn-114. The active-site Proton donor is the His-115. 2 residues coordinate Mn(2+): His-164 and His-238. A Leucine methyl ester modification is found at Leu-306.

Belongs to the PPP phosphatase family. PP-2A subfamily. PP2A consists of a common heterodimeric core enzyme, composed of a 36 kDa catalytic subunit (subunit C) and a 65 kDa constant regulatory subunit (subunit A), that associates with a variety of regulatory subunits such as subunits B (the R2/B/PR55/B55, R3/B''/PR72/PR130/PR59 and R5/B'/B56 families). Interacts with B'THETA. Interacts with HDA14. Interacts with SRK2E/OST1. Interacts with TAP46. The cofactor is Mn(2+). Post-translationally, reversibly methyl esterified on Leu-306 by leucine carboxyl methyltransferase 1 (LCMT1) and pectin methylesterase 1 (PME1). Carboxyl methylation influences the affinity of the catalytic subunit for the different regulatory subunits, thereby modulating the PP2A holoenzyme's substrate specificity, enzyme activity and cellular localization. In terms of processing, phosphorylation of either threonine (by autophosphorylation-activated protein kinase) or tyrosine results in inactivation of the phosphatase. Auto-dephosphorylation has been suggested as a mechanism for reactivation. Expressed in root meristem, emerging lateral roots, leaf vasculature, stipules, guard cells, anthers and pollen grains.

Its subcellular location is the cytoplasm. The protein resides in the cytosol. The protein localises to the nucleus. It is found in the peroxisome. The catalysed reaction is O-phospho-L-seryl-[protein] + H2O = L-seryl-[protein] + phosphate. It carries out the reaction O-phospho-L-threonyl-[protein] + H2O = L-threonyl-[protein] + phosphate. Dephosphorylates and activates the actin-depolymerizing factor ADF1, which, in turn, regulates actin cytoskeleton remodeling and is involved in the blue light photoreceptor PHOT2-mediated chloroplast avoidance movements. Associates with the serine/threonine-protein phosphatase PP2A regulatory subunits A and B' to positively regulates beta-oxidation of fatty acids and protoauxins in peroxisomes by dephosphorylating peroxisomal beta-oxidation-related proteins. Acts as a negative regulator of abscisic acid (ABA) signaling. May regulate ABA-dependent gene expression. Involved in the light-dependent activation of nitrate reductase. The polypeptide is Serine/threonine-protein phosphatase PP2A-2 catalytic subunit (Arabidopsis thaliana (Mouse-ear cress)).